The chain runs to 1881 residues: Nuclear pore membrane glycoprotein 210-like (1881 aa).

Positions 1-32 are cleaved as a signal peptide; sequence MIAFGAPRRRSFGLLFSLAPHLFFLFLIGTLA. N-linked (GlcNAc...) asparagine glycans are attached at residues Asn-80, Asn-344, and Asn-808. The 73-residue stretch at 1078-1150 folds into the BIG2 domain; sequence FPPFRLIPEK…TIQTVNEDTG (73 aa). N-linked (GlcNAc...) asparagine glycosylation occurs at Asn-1441. The helical transmembrane segment at 1804–1824 threads the bilayer; that stretch reads YQILLFTLFAVLASTSFIFLA.

The protein belongs to the NUP210 family. In terms of tissue distribution, expressed in testis.

It is found in the nucleus membrane. The protein localises to the nucleus. It localises to the nucleoplasm. This chain is Nuclear pore membrane glycoprotein 210-like (Nup210l), found in Mus musculus (Mouse).